The primary structure comprises 524 residues: Peptide chain release factor 3 (524 aa).

In terms of domain architecture, tr-type G spans 11 to 278; the sequence is AKRRTFAIIS…SFVQYAPEPG (268 aa). Residues 20–27, 88–92, and 142–145 contribute to the GTP site; these read SHPDAGKT, DTPGH, and NKLD.

The protein belongs to the TRAFAC class translation factor GTPase superfamily. Classic translation factor GTPase family. PrfC subfamily.

It localises to the cytoplasm. In terms of biological role, increases the formation of ribosomal termination complexes and stimulates activities of RF-1 and RF-2. It binds guanine nucleotides and has strong preference for UGA stop codons. It may interact directly with the ribosome. The stimulation of RF-1 and RF-2 is significantly reduced by GTP and GDP, but not by GMP. This chain is Peptide chain release factor 3, found in Lacticaseibacillus casei (strain BL23) (Lactobacillus casei).